We begin with the raw amino-acid sequence, 85 residues long: Anti-neuroexcitation peptide 3 (85 aa).

An N-terminal signal peptide occupies residues 1-21 (MKLSLLLVISASMLIDGLVNA). Positions 22–82 (DGYIRGSNGC…TWKSESNTCG (61 aa)) constitute an LCN-type CS-alpha/beta domain. Intrachain disulfides connect C31-C81, C35-C56, C42-C63, and C46-C65.

It belongs to the long (4 C-C) scorpion toxin superfamily. Sodium channel inhibitor family. Beta subfamily. In terms of tissue distribution, expressed by the venom gland.

The protein resides in the secreted. Its function is as follows. Binds to sodium channels (Nav) and inhibits them. Recombinant ANEP delays the convulsion seizure of model animals by 18% and shows anti-neuroexcitatory activity. The polypeptide is Anti-neuroexcitation peptide 3 (Olivierus martensii (Manchurian scorpion)).